A 347-amino-acid chain; its full sequence is Fructose-1,6-bisphosphatase class 1 (347 aa).

Mg(2+) is bound by residues Glu-107, Asp-128, Leu-130, and Asp-131. Residues 131–134, Asn-224, Tyr-257, and Lys-286 contribute to the substrate site; that span reads DGSS. Position 292 (Glu-292) interacts with Mg(2+).

Belongs to the FBPase class 1 family. As to quaternary structure, homotetramer. Mg(2+) serves as cofactor.

It localises to the cytoplasm. It carries out the reaction beta-D-fructose 1,6-bisphosphate + H2O = beta-D-fructose 6-phosphate + phosphate. It functions in the pathway carbohydrate biosynthesis; gluconeogenesis. This chain is Fructose-1,6-bisphosphatase class 1, found in Sorangium cellulosum (strain So ce56) (Polyangium cellulosum (strain So ce56)).